The primary structure comprises 718 residues: Polyribonucleotide nucleotidyltransferase (718 aa).

Residues aspartate 496 and aspartate 502 each contribute to the Mg(2+) site. Residues 563 to 622 (PRLLTIKIDPDMIGLVIGPGGKTIKGITEETGAKIDIEDDGTVTISAVDENKAKRARNIV) form the KH domain. The S1 motif domain occupies 632–700 (GDVYAGRVTR…NKGRINLTRL (69 aa)).

The protein belongs to the polyribonucleotide nucleotidyltransferase family. Mg(2+) serves as cofactor.

The protein localises to the cytoplasm. It catalyses the reaction RNA(n+1) + phosphate = RNA(n) + a ribonucleoside 5'-diphosphate. Involved in mRNA degradation. Catalyzes the phosphorolysis of single-stranded polyribonucleotides processively in the 3'- to 5'-direction. This chain is Polyribonucleotide nucleotidyltransferase, found in Trichormus variabilis (strain ATCC 29413 / PCC 7937) (Anabaena variabilis).